Reading from the N-terminus, the 574-residue chain is Membrane protein insertase YidC (574 aa).

A run of 6 helical transmembrane segments spans residues 6 to 26, 356 to 376, 380 to 400, 447 to 467, 489 to 509, and 525 to 545; these read VFLI…WGKD, FSIM…LHSF, WGWA…PLSA, GGCL…WVLV, PYFI…KLTP, and PLVF…YWVV.

The protein belongs to the OXA1/ALB3/YidC family. Type 1 subfamily. Interacts with the Sec translocase complex via SecD. Specifically interacts with transmembrane segments of nascent integral membrane proteins during membrane integration.

Its subcellular location is the cell inner membrane. Functionally, required for the insertion and/or proper folding and/or complex formation of integral membrane proteins into the membrane. Involved in integration of membrane proteins that insert both dependently and independently of the Sec translocase complex, as well as at least some lipoproteins. Aids folding of multispanning membrane proteins. This chain is Membrane protein insertase YidC, found in Xanthomonas axonopodis pv. citri (strain 306).